Here is a 549-residue protein sequence, read N- to C-terminus: MKLALALSLIASVAAAPTATLANGDTITGLNAIINEAFLGIPFAEPPVGNLRFKDPVPYRGSLNGQSFTAYGPSCMQQNPEGTYEENLPKVALDLVMQSKVFQAVLPNSEDCLTINVVRPPGTKAGANLPVMLWIFGGGFEIGSPTIFPPAQMVSKSVLMGKPIIHVAVNYRLASFGFLAGPDIKAEGSSNAGLKDQRLGMQWVADNIAGFGGDPSKVTIFGESAGSMSVLCHLLWNGGDNTYKGKPLFRAGIMQSGAMVPSDPVDGTYGTQIYDTLVASTGCSSASNKLACLRGLSTQALLDATNDTPGFLSYTSLRLSYLPRPDGANITDDMYKLVRDGKYASVPVIIGDQNDEGFLFGLSSLNTTTEADAEAYLRKSFIHATDADITALKAAYPSDVTQGSPFDTGILNALTPQLKRINAVLGDLTFTLSRRYFLNHYTGGPKYSFLSKQLSGLPILGTFHANDIVWQHFLLGSGSVIYNNAFIAFATDLDPNTAGLSVQWPKSTSSSQAGDNLMQISALGLYTGKDNFRTAGYNALFADPSHFFV.

Residues 1–15 form the signal peptide; it reads MKLALALSLIASVAA. A disulfide bond links C75 and C112. S224 serves as the catalytic Acyl-ester intermediate. Cysteines 283 and 292 form a disulfide. An N-linked (GlcNAc...) asparagine glycan is attached at N329. The active-site Charge relay system is E356. A glycan (N-linked (GlcNAc...) asparagine) is linked at N366. H464 acts as the Charge relay system in catalysis.

This sequence belongs to the type-B carboxylesterase/lipase family.

The catalysed reaction is a triacylglycerol + H2O = a diacylglycerol + a fatty acid + H(+). The protein is Lipase 5 (LIP5) of Diutina rugosa (Yeast).